A 340-amino-acid polypeptide reads, in one-letter code: Phenylalanine--tRNA ligase alpha subunit (340 aa).

A Mg(2+)-binding site is contributed by glutamate 255.

The protein belongs to the class-II aminoacyl-tRNA synthetase family. Phe-tRNA synthetase alpha subunit type 1 subfamily. Tetramer of two alpha and two beta subunits. Mg(2+) is required as a cofactor.

The protein resides in the cytoplasm. It carries out the reaction tRNA(Phe) + L-phenylalanine + ATP = L-phenylalanyl-tRNA(Phe) + AMP + diphosphate + H(+). The sequence is that of Phenylalanine--tRNA ligase alpha subunit from Desulfitobacterium hafniense (strain DSM 10664 / DCB-2).